A 194-amino-acid polypeptide reads, in one-letter code: Peptidyl-tRNA hydrolase (194 aa).

Residue Tyr-16 participates in tRNA binding. Catalysis depends on His-21, which acts as the Proton acceptor. TRNA contacts are provided by Phe-67, Asn-69, and Asn-115.

Belongs to the PTH family. In terms of assembly, monomer.

It localises to the cytoplasm. It carries out the reaction an N-acyl-L-alpha-aminoacyl-tRNA + H2O = an N-acyl-L-amino acid + a tRNA + H(+). In terms of biological role, hydrolyzes ribosome-free peptidyl-tRNAs (with 1 or more amino acids incorporated), which drop off the ribosome during protein synthesis, or as a result of ribosome stalling. Catalyzes the release of premature peptidyl moieties from peptidyl-tRNA molecules trapped in stalled 50S ribosomal subunits, and thus maintains levels of free tRNAs and 50S ribosomes. This is Peptidyl-tRNA hydrolase from Shigella boydii serotype 4 (strain Sb227).